Here is a 396-residue protein sequence, read N- to C-terminus: Pectinesterase (396 aa).

Residues 1–26 (MQSTTLYLKTAAFLGGCSLFAATALA) form the signal peptide. A substrate-binding site is contributed by threonine 174. The Proton donor role is filled by aspartate 232. Catalysis depends on aspartate 259, which acts as the Nucleophile. Residues arginine 324 and tryptophan 326 each coordinate substrate.

Belongs to the pectinesterase family.

It localises to the secreted. It catalyses the reaction [(1-&gt;4)-alpha-D-galacturonosyl methyl ester](n) + n H2O = [(1-&gt;4)-alpha-D-galacturonosyl](n) + n methanol + n H(+). It participates in glycan metabolism; pectin degradation; 2-dehydro-3-deoxy-D-gluconate from pectin: step 1/5. In terms of biological role, involved in maceration and soft-rotting of plant tissue. This chain is Pectinesterase (pme), found in Ralstonia solanacearum (Pseudomonas solanacearum).